Reading from the N-terminus, the 1207-residue chain is Glycerotoxin paralog 1 (1207 aa).

Positions 79 to 120 constitute an EGF-like domain; that stretch reads DLNECNRNNGGCTNGKCINTEGSYHCDCDRGYLATSSRTKCE. Cystine bridges form between Cys-83–Cys-95, Cys-90–Cys-104, Cys-106–Cys-119, Cys-124–Cys-167, and Cys-151–Cys-185. Residues 122 to 187 form the Sushi domain; the sequence is VECEPLTLAN…WSGTSPTCQN (66 aa). WSC domains are found at residues 300-391 and 392-476; these read VGTS…YRDR and SLGF…NDQG. N-linked (GlcNAc...) asparagine glycosylation is present at Asn-745.

In terms of assembly, dimer; probably disulfide-linked. Interacts with Cav2.2/CACNA1B calcium channel. In terms of tissue distribution, expressed exclusively in the four pharyngeal lobes and in tissue located at the base of the teeth. No distinct expression is visible in the putative venom glands or elsewhere in the pharynx.

The protein localises to the secreted. Potent venom presynaptic neurotoxin that promotes a long-lasting increase in spontaneous neurotransmitter release at the peripheral and central synapses by selective activation of Cav2.2/CACNA1B (N-type) channels. In addition, it drastically enhances synaptic-vesicle recycling, an effect that is prevented by the Cav2.2-specific inhibitor conotoxin-MVIIA. It activates Cav2.2/CACNA1B by shifting the current-voltage relationship of channels towards more hyperpolarized potentiels in a reversible manner. May have two separate sites of action on Cav2.2: one high affinity linked to changes in gating properties, and a second low affinity that results in block of current activity. The sequence is that of Glycerotoxin paralog 1 from Glycera tridactyla (Glycerine worm).